The primary structure comprises 405 residues: Elongation factor Tu (405 aa).

The region spanning 10 to 213 (KEHVNVGTIG…AMDEYIPTPE (204 aa)) is the tr-type G domain. The interval 19-26 (GHVDHGKS) is G1. 19–26 (GHVDHGKS) serves as a coordination point for GTP. Serine 26 is a Mg(2+) binding site. The G2 stretch occupies residues 64 to 68 (GITIN). Residues 85 to 88 (DCPG) are G3. GTP contacts are provided by residues 85–89 (DCPGH) and 140–143 (NKCD). A G4 region spans residues 140-143 (NKCD). Positions 178–180 (SAL) are G5.

It belongs to the TRAFAC class translation factor GTPase superfamily. Classic translation factor GTPase family. EF-Tu/EF-1A subfamily. Monomer.

The protein localises to the cytoplasm. The catalysed reaction is GTP + H2O = GDP + phosphate + H(+). Functionally, GTP hydrolase that promotes the GTP-dependent binding of aminoacyl-tRNA to the A-site of ribosomes during protein biosynthesis. In Aquifex pyrophilus, this protein is Elongation factor Tu.